The following is a 224-amino-acid chain: Ribose-5-phosphate isomerase A (224 aa).

Substrate is bound by residues 26-29 (TGST), 81-84 (DGAD), and 94-97 (KGGG). Glu-103 (proton acceptor) is an active-site residue. Lys-121 provides a ligand contact to substrate.

It belongs to the ribose 5-phosphate isomerase family. In terms of assembly, homodimer.

It carries out the reaction aldehydo-D-ribose 5-phosphate = D-ribulose 5-phosphate. It participates in carbohydrate degradation; pentose phosphate pathway; D-ribose 5-phosphate from D-ribulose 5-phosphate (non-oxidative stage): step 1/1. In terms of biological role, catalyzes the reversible conversion of ribose-5-phosphate to ribulose 5-phosphate. The polypeptide is Ribose-5-phosphate isomerase A (Listeria innocua serovar 6a (strain ATCC BAA-680 / CLIP 11262)).